The chain runs to 658 residues: Outer dynein arm-docking complex subunit 1 (658 aa).

Coiled-coil stretches lie at residues 11–156, 186–234, and 303–380; these read KEVH…RYLN, REEA…KNDE, and NFIN…TDIQ. 2 disordered regions span residues 496–552 and 574–658; these read DEEE…SVSH and GAPV…RGYN. Ser-500, Ser-506, Ser-507, and Ser-509 each carry phosphoserine. 4 stretches are compositionally biased toward low complexity: residues 506 to 519, 574 to 583, 592 to 604, and 621 to 639; these read SSPS…QISL, GAPVSSRSSQ, TSSS…TGYL, and SMGS…HASS.

This sequence belongs to the ODA1/DCC2 family. As to quaternary structure, component of the outer dynein arm-docking complex along with ODAD2, ODAD3, ODAD4 and CLXN. Interacts with ODAD3. Interacts with ODAD4; this interaction may facilitate the recruitment and/or attachment of outer dynein arm docking complex proteins including ODAD1, ODAD3, and ODAD4 to ciliary axonemes. Interacts with DNAH9. Interacts with MNS1. Interacts with PIERCE1 and PIERCE2; the interactions link the outer dynein arms docking complex (ODA-DC) to the internal microtubule inner proteins (MIP) in cilium axoneme. Expressed in motile ciliated tissues.

It is found in the cytoplasm. Its subcellular location is the cytoskeleton. The protein resides in the cilium axoneme. Its function is as follows. Component of the outer dynein arm-docking complex that mediates outer dynein arms (ODA) binding onto the doublet microtubule. Involved in mediating assembly of both ODAs and their axonemal docking complex onto ciliary microtubules. This Mus musculus (Mouse) protein is Outer dynein arm-docking complex subunit 1 (Odad1).